The primary structure comprises 1138 residues: Nuclear pore complex-interacting protein family member B4 (1138 aa).

The helical transmembrane segment at 63-87 (VIIAFPTSYKVVITLWIVYLWVSLL) threads the bilayer. Disordered stretches follow at residues 241–263 (NRMG…SLSL), 291–620 (TPLP…NIKT), and 873–1138 (ERLR…RRLS). Residues 252–262 (QQHSITDNSLS) are compositionally biased toward polar residues. Pro residues predominate over residues 349–359 (PLPPSALPSAP). Composition is skewed to basic and acidic residues over residues 406 to 416 (DNIKTPAERLR), 448 to 458 (DNIKTPAERLR), 490 to 500 (DNIKTPAERLR), 532 to 542 (DNIKTPAERLR), 574 to 584 (DNIKTPAERLR), 908 to 918 (DNIKTPAERLR), 950 to 960 (DNIKTPAERLR), and 992 to 1002 (DNIKTPAERLR).

The protein belongs to the NPIP family.

The protein resides in the membrane. The sequence is that of Nuclear pore complex-interacting protein family member B4 (NPIPB4) from Homo sapiens (Human).